The following is a 197-amino-acid chain: Holliday junction branch migration complex subunit RuvA (197 aa).

The segment at 1–64 (MYEYIKGKYI…EDFIGVYGFL (64 aa)) is domain I. A domain II region spans residues 65-143 (TKDELSMFKL…IDILEEDDEQ (79 aa)). The segment at 144 to 148 (TINKV) is flexible linker. Residues 149–197 (TDDKKVLEAVAALITLGYSEKEANKVINSCDKNNSLEQIIKEALKYLMK) are domain III.

Belongs to the RuvA family. In terms of assembly, homotetramer. Forms an RuvA(8)-RuvB(12)-Holliday junction (HJ) complex. HJ DNA is sandwiched between 2 RuvA tetramers; dsDNA enters through RuvA and exits via RuvB. An RuvB hexamer assembles on each DNA strand where it exits the tetramer. Each RuvB hexamer is contacted by two RuvA subunits (via domain III) on 2 adjacent RuvB subunits; this complex drives branch migration. In the full resolvosome a probable DNA-RuvA(4)-RuvB(12)-RuvC(2) complex forms which resolves the HJ.

It is found in the cytoplasm. Its function is as follows. The RuvA-RuvB-RuvC complex processes Holliday junction (HJ) DNA during genetic recombination and DNA repair, while the RuvA-RuvB complex plays an important role in the rescue of blocked DNA replication forks via replication fork reversal (RFR). RuvA specifically binds to HJ cruciform DNA, conferring on it an open structure. The RuvB hexamer acts as an ATP-dependent pump, pulling dsDNA into and through the RuvAB complex. HJ branch migration allows RuvC to scan DNA until it finds its consensus sequence, where it cleaves and resolves the cruciform DNA. In Clostridium botulinum (strain 657 / Type Ba4), this protein is Holliday junction branch migration complex subunit RuvA.